Consider the following 247-residue polypeptide: 5'-nucleotidase SurE (247 aa).

Residues Asp-8, Asp-9, Ser-39, and Asn-95 each contribute to the a divalent metal cation site.

It belongs to the SurE nucleotidase family. The cofactor is a divalent metal cation.

The protein localises to the cytoplasm. It catalyses the reaction a ribonucleoside 5'-phosphate + H2O = a ribonucleoside + phosphate. Nucleotidase that shows phosphatase activity on nucleoside 5'-monophosphates. This Thermotoga petrophila (strain ATCC BAA-488 / DSM 13995 / JCM 10881 / RKU-1) protein is 5'-nucleotidase SurE.